The chain runs to 351 residues: UDP-3-O-acylglucosamine N-acyltransferase (351 aa).

The active-site Proton acceptor is histidine 257.

It belongs to the transferase hexapeptide repeat family. LpxD subfamily. As to quaternary structure, homotrimer.

The catalysed reaction is a UDP-3-O-[(3R)-3-hydroxyacyl]-alpha-D-glucosamine + a (3R)-hydroxyacyl-[ACP] = a UDP-2-N,3-O-bis[(3R)-3-hydroxyacyl]-alpha-D-glucosamine + holo-[ACP] + H(+). It participates in bacterial outer membrane biogenesis; LPS lipid A biosynthesis. Its function is as follows. Catalyzes the N-acylation of UDP-3-O-acylglucosamine using 3-hydroxyacyl-ACP as the acyl donor. Is involved in the biosynthesis of lipid A, a phosphorylated glycolipid that anchors the lipopolysaccharide to the outer membrane of the cell. This chain is UDP-3-O-acylglucosamine N-acyltransferase, found in Methylorubrum extorquens (strain CM4 / NCIMB 13688) (Methylobacterium extorquens).